The following is a 260-amino-acid chain: Capsid protein (260 aa).

The short motif at Lys3–Arg20 is the Bipartite nuclear localization signal element. The short motif at Lys41–Arg55 is the Nuclear localization signal element. A zinc finger spans residues Cys69 to His86. The Nuclear export signal motif lies at Ile102–Met123. The short motif at Lys202–Arg251 is the Bipartite nuclear localization signal element.

The protein belongs to the geminiviridae capsid protein family. In terms of assembly, homomultimer. Binds to single-stranded and double-stranded viral DNA. Interacts (via nuclear localization signals) with host importin alpha-1a.

Its subcellular location is the virion. It is found in the host nucleus. Functionally, encapsidates the viral genome into characteristic twinned ('geminate') particles. Binds the genomic viral ssDNA and shuttles it into and out of the cell nucleus. Plays a role in protection of the genome from degradation, virus acquisition and transmission by insect vectors, infectivity, and systemic movement. The CP of monopartite geminiviruses is absolutely essential for virus movement. This is Capsid protein from Cynanchum acutum (Little mallow).